A 287-amino-acid polypeptide reads, in one-letter code: Spermidine/putrescine transport system permease protein PotB (287 aa).

Over 1–10 (MKNTSKFQNV) the chain is Cytoplasmic. Residues 11–31 (VIVTIVGWLVLFVFLPNLMII) traverse the membrane as a helical segment. Topologically, residues 32 to 70 (GTSFLTRDDASFVKMVFTLDNYARLLDPLYFEVLLHSLN) are periplasmic. The region spanning 65 to 271 (LLHSLNMALI…IVMGLMLLIY (207 aa)) is the ABC transmembrane type-1 domain. A helical membrane pass occupies residues 71–91 (MALIATLSCLVLGYPFAWFLA). Topologically, residues 92–99 (KLPEKIRP) are cytoplasmic. A helical membrane pass occupies residues 100–120 (LLLFLLIVPFWTNSLIRIYGL). Residues 121-145 (KIFLSTKGYLNEFLLWLGVIDTPIR) are Periplasmic-facing. Residues 146-166 (IMFTPSAVIIGLVYILLPFMV) traverse the membrane as a helical segment. Residues 167-197 (MPLYSSIEKLDKPLLEAARDLGASKMQTFIR) are Cytoplasmic-facing. A helical membrane pass occupies residues 198 to 218 (IIIPLTMPGIVAGCLLVMLPA). At 219–251 (MGLFYVSDLMGGAKNLLIGNVIKVQFLNIRDWP) the chain is on the periplasmic side. Residues 252–272 (FGAATSITLTIVMGLMLLIYW) traverse the membrane as a helical segment. The Cytoplasmic portion of the chain corresponds to 273–287 (RASRLLNKKVSDISD).

The protein belongs to the binding-protein-dependent transport system permease family. CysTW subfamily.

It is found in the cell inner membrane. Functionally, required for the activity of the bacterial periplasmic transport system of putrescine and spermidine. In Salmonella typhi, this protein is Spermidine/putrescine transport system permease protein PotB (potB).